The following is a 672-amino-acid chain: Serine/threonine-protein kinase ppk16 (672 aa).

The Protein kinase domain occupies 31 to 279; it reads YRIESVVGEG…IDQIISHPYF (249 aa). ATP-binding positions include 37–45 and Lys-60; that span reads VGEGSFGKV. The Proton acceptor role is filled by Asp-148. Ser-231 carries the phosphoserine modification. Over residues 375-384 the composition is skewed to polar residues; it reads VSVMSNNQDS. 4 disordered regions span residues 375–396, 416–436, 464–572, and 632–672; these read VSVM…DSSN, DTLS…ENYL, NSFG…YSNV, and SGRK…TDLL. The segment covering 472–487 has biased composition (polar residues); sequence NLPQTTHVDTGEQNTP. The segment covering 508-523 has biased composition (low complexity); that stretch reads SNSQNSPSKSSNLSIN. The span at 531-541 shows a compositional bias: polar residues; that stretch reads LQNTVISPQPT. 2 stretches are compositionally biased toward low complexity: residues 549–572 and 639–649; these read RSLS…YSNV and SSSSLMFNQSS.

This sequence belongs to the protein kinase superfamily. Ser/Thr protein kinase family.

The protein resides in the cytoplasm. The enzyme catalyses L-seryl-[protein] + ATP = O-phospho-L-seryl-[protein] + ADP + H(+). It carries out the reaction L-threonyl-[protein] + ATP = O-phospho-L-threonyl-[protein] + ADP + H(+). Its function is as follows. Has a role in meiosis. In Schizosaccharomyces pombe (strain 972 / ATCC 24843) (Fission yeast), this protein is Serine/threonine-protein kinase ppk16 (ppk16).